Reading from the N-terminus, the 405-residue chain is uncharacterized protein (405 aa).

This is an uncharacterized protein from Saimiri sciureus (Common squirrel monkey).